Reading from the N-terminus, the 2208-residue chain is RNA-directed RNA polymerase L (2208 aa).

Positions 26 to 284 (KDALLSQVHP…LHQDSDTINC (259 aa)) are endonuclease. Mn(2+) contacts are provided by glutamate 51, aspartate 89, and glutamate 102. The active site involves lysine 115. In terms of domain architecture, RdRp catalytic spans 1171 to 1367 (CDMKMAVNNG…YLSSKLNKFV (197 aa)). A Mg(2+)-binding site is contributed by aspartate 1329.

The protein belongs to the Bunyavirales RNA polymerase family. As to quaternary structure, homomultimer; the oligomeric structure is essential for the polymerase activity. Interacts with nucleoprotein N. Interacts with protein Z; this interaction inhibits viral transcription and replication, Z partially blocks the product exit tunnel for the releasing nascent RNA product. Requires Mn(2+) as cofactor. Mg(2+) is required as a cofactor.

The protein resides in the virion. Its subcellular location is the host cytoplasm. It carries out the reaction RNA(n) + a ribonucleoside 5'-triphosphate = RNA(n+1) + diphosphate. In terms of biological role, RNA-dependent RNA polymerase, which is responsible for the replication and transcription of the viral RNA genome using antigenomic RNA as an intermediate. During transcription, synthesizes subgenomic RNAs and assures their capping by a cap-snatching mechanism, which involves the endonuclease activity cleaving the host capped pre-mRNAs. These short capped RNAs are then used as primers for viral transcription. The 3'-end of subgenomic mRNAs molecules are heterogeneous and not polyadenylated. The replicase function is to direct synthesis of antigenomic and genomic RNA which are encapsidated and non capped. As a consequence of the use of the same enzyme for both transcription and replication, these mechanisms need to be well coordinated. These processes may be regulated by proteins N and Z in a dose-dependent manner. Z protein inhibits the viral polymerase L und thus the viral transcription and RNA synthesis. In Homo sapiens (Human), this protein is RNA-directed RNA polymerase L.